Reading from the N-terminus, the 449-residue chain is Hyaluronidase (449 aa).

An N-terminal signal peptide occupies residues 1–23 (MYHLWIKCLAAWIFLKRFNGVHV). Cystine bridges form between C47–C340 and C211–C227. 2 N-linked (GlcNAc...) asparagine glycosylation sites follow: N67 and N103. E135 acts as the Proton donor in catalysis. A glycan (N-linked (GlcNAc...) asparagine) is linked at N153. An N-linked (GlcNAc...) asparagine glycan is attached at N357. 3 disulfides stabilise this stretch: C365-C376, C370-C427, and C429-C438. N-linked (GlcNAc...) asparagine glycosylation occurs at N401. An EGF-like domain is found at 427-438 (CQCYQGWQGLYC).

It belongs to the glycosyl hydrolase 56 family. Monomer. As to expression, expressed by the venom gland.

The protein localises to the secreted. The enzyme catalyses Random hydrolysis of (1-&gt;4)-linkages between N-acetyl-beta-D-glucosamine and D-glucuronate residues in hyaluronate.. In terms of biological role, snake venom endo-hyaluronidase that degrades hyaluronan to smaller oligosaccharide fragments. In venom, it is not toxic by itself, but increases the diffusion of other venom proteins by degrading the extracellular matrix. In addition, it displays antiedematogenic activity. This Echis ocellatus (Ocellated saw-scaled viper) protein is Hyaluronidase.